A 280-amino-acid polypeptide reads, in one-letter code: Succinate dehydrogenase [ubiquinone] iron-sulfur subunit, mitochondrial (280 aa).

A mitochondrion-targeting transit peptide spans 1–25; it reads MAAVCFSLSRCCSAVHRPAVTAVRF. The 91-residue stretch at 39 to 129 folds into the 2Fe-2S ferredoxin-type domain; sequence KKFQIYRWDP…TSKVTKIYPL (91 aa). Residues Cys92, Cys97, Cys100, and Cys112 each contribute to the [2Fe-2S] cluster site. One can recognise a 4Fe-4S ferredoxin-type domain in the interval 175–205; the sequence is DRQKLDGLYECILCACCSTSCPSYWWNADKY. 3 residues coordinate [4Fe-4S] cluster: Cys185, Cys188, and Cys191. A [3Fe-4S] cluster-binding site is contributed by Cys195. Trp200 provides a ligand contact to a ubiquinone. The [3Fe-4S] cluster site is built by Cys242 and Cys248. Cys252 is a binding site for [4Fe-4S] cluster.

Belongs to the succinate dehydrogenase/fumarate reductase iron-sulfur protein family. As to quaternary structure, component of complex II composed of four subunits: the flavoprotein (FP) sdha, iron-sulfur protein (IP) sdhb, and a cytochrome b composed of sdhc and sdhd. It depends on [2Fe-2S] cluster as a cofactor. [3Fe-4S] cluster serves as cofactor. The cofactor is [4Fe-4S] cluster.

It localises to the mitochondrion inner membrane. The enzyme catalyses a quinone + succinate = fumarate + a quinol. It catalyses the reaction (R)-malate + a quinone = enol-oxaloacetate + a quinol. The catalysed reaction is (S)-malate + a quinone = enol-oxaloacetate + a quinol. It functions in the pathway carbohydrate metabolism; tricarboxylic acid cycle; fumarate from succinate (eukaryal route): step 1/1. Enol-oxaloacetate inhibits the succinate dehydrogenase activity. Its function is as follows. Iron-sulfur protein (IP) subunit of the succinate dehydrogenase complex (mitochondrial respiratory chain complex II), responsible for transferring electrons from succinate to ubiquinone (coenzyme Q). SDH also oxidizes malate to the non-canonical enol form of oxaloacetate, enol-oxaloacetate. Enol-oxaloacetate, which is a potent inhibitor of the succinate dehydrogenase activity, is further isomerized into keto-oxaloacetate. This is Succinate dehydrogenase [ubiquinone] iron-sulfur subunit, mitochondrial (sdhb) from Danio rerio (Zebrafish).